We begin with the raw amino-acid sequence, 311 residues long: 4-diphosphocytidyl-2-C-methyl-D-erythritol kinase (311 aa).

Lys-16 is a catalytic residue. 100-110 (PIGAGLAGGSS) contacts ATP. Asp-142 is an active-site residue.

Belongs to the GHMP kinase family. IspE subfamily.

The catalysed reaction is 4-CDP-2-C-methyl-D-erythritol + ATP = 4-CDP-2-C-methyl-D-erythritol 2-phosphate + ADP + H(+). The protein operates within isoprenoid biosynthesis; isopentenyl diphosphate biosynthesis via DXP pathway; isopentenyl diphosphate from 1-deoxy-D-xylulose 5-phosphate: step 3/6. Functionally, catalyzes the phosphorylation of the position 2 hydroxy group of 4-diphosphocytidyl-2C-methyl-D-erythritol. This chain is 4-diphosphocytidyl-2-C-methyl-D-erythritol kinase, found in Prochlorococcus marinus (strain MIT 9312).